The primary structure comprises 435 residues: Tol-Pal system protein TolB (435 aa).

Positions 1–20 (MRKIIAGVFIFVFLISNLYA) are cleaved as a signal peptide.

This sequence belongs to the TolB family. As to quaternary structure, the Tol-Pal system is composed of five core proteins: the inner membrane proteins TolA, TolQ and TolR, the periplasmic protein TolB and the outer membrane protein Pal. They form a network linking the inner and outer membranes and the peptidoglycan layer.

It localises to the periplasm. Part of the Tol-Pal system, which plays a role in outer membrane invagination during cell division and is important for maintaining outer membrane integrity. This is Tol-Pal system protein TolB from Francisella tularensis subsp. tularensis (strain WY96-3418).